We begin with the raw amino-acid sequence, 61 residues long: Large ribosomal subunit protein uL30 (61 aa).

This sequence belongs to the universal ribosomal protein uL30 family. In terms of assembly, part of the 50S ribosomal subunit.

This chain is Large ribosomal subunit protein uL30, found in Parafrankia sp. (strain EAN1pec).